A 479-amino-acid chain; its full sequence is Glutamate--tRNA ligase (479 aa).

A 'HIGH' region motif is present at residues 11-21 (PSPTGYLHIGG). Zn(2+) is bound by residues cysteine 108, cysteine 110, cysteine 135, and glutamate 137. The short motif at 250–254 (KLSKR) is the 'KMSKS' region element. Lysine 253 is a binding site for ATP.

This sequence belongs to the class-I aminoacyl-tRNA synthetase family. Glutamate--tRNA ligase type 1 subfamily. Monomer. Zn(2+) is required as a cofactor.

The protein resides in the cytoplasm. The catalysed reaction is tRNA(Glu) + L-glutamate + ATP = L-glutamyl-tRNA(Glu) + AMP + diphosphate. Functionally, catalyzes the attachment of glutamate to tRNA(Glu) in a two-step reaction: glutamate is first activated by ATP to form Glu-AMP and then transferred to the acceptor end of tRNA(Glu). This chain is Glutamate--tRNA ligase, found in Myxococcus xanthus (strain DK1622).